The sequence spans 505 residues: Glycerol kinase (505 aa).

Residue Thr17 participates in ADP binding. Thr17, Thr18, and Ser19 together coordinate ATP. Thr17 serves as a coordination point for sn-glycerol 3-phosphate. Arg21 lines the ADP pocket. 4 residues coordinate sn-glycerol 3-phosphate: Arg87, Glu88, Tyr139, and Asp250. 5 residues coordinate glycerol: Arg87, Glu88, Tyr139, Asp250, and Gln251. Residues Thr272 and Gly315 each coordinate ADP. 4 residues coordinate ATP: Thr272, Gly315, Gln319, and Gly416. ADP is bound by residues Gly416 and Asn420.

Belongs to the FGGY kinase family.

The enzyme catalyses glycerol + ATP = sn-glycerol 3-phosphate + ADP + H(+). It participates in polyol metabolism; glycerol degradation via glycerol kinase pathway; sn-glycerol 3-phosphate from glycerol: step 1/1. Its activity is regulated as follows. Inhibited by fructose 1,6-bisphosphate (FBP). In terms of biological role, key enzyme in the regulation of glycerol uptake and metabolism. Catalyzes the phosphorylation of glycerol to yield sn-glycerol 3-phosphate. The polypeptide is Glycerol kinase (Azotobacter vinelandii (strain DJ / ATCC BAA-1303)).